A 331-amino-acid polypeptide reads, in one-letter code: Glycerol-3-phosphate dehydrogenase [NAD(P)+] (331 aa).

NADPH is bound by residues serine 10, tryptophan 11, and lysine 101. 3 residues coordinate sn-glycerol 3-phosphate: lysine 101, glycine 132, and serine 134. Alanine 136 provides a ligand contact to NADPH. Lysine 188, aspartate 241, serine 251, arginine 252, and asparagine 253 together coordinate sn-glycerol 3-phosphate. Lysine 188 (proton acceptor) is an active-site residue. Arginine 252 serves as a coordination point for NADPH. Valine 276 and glutamate 278 together coordinate NADPH.

Belongs to the NAD-dependent glycerol-3-phosphate dehydrogenase family.

It is found in the cytoplasm. It carries out the reaction sn-glycerol 3-phosphate + NAD(+) = dihydroxyacetone phosphate + NADH + H(+). The enzyme catalyses sn-glycerol 3-phosphate + NADP(+) = dihydroxyacetone phosphate + NADPH + H(+). Its pathway is membrane lipid metabolism; glycerophospholipid metabolism. In terms of biological role, catalyzes the reduction of the glycolytic intermediate dihydroxyacetone phosphate (DHAP) to sn-glycerol 3-phosphate (G3P), the key precursor for phospholipid synthesis. The polypeptide is Glycerol-3-phosphate dehydrogenase [NAD(P)+] (Acholeplasma laidlawii (strain PG-8A)).